Consider the following 351-residue polypeptide: Phosphoribosylformylglycinamidine cyclo-ligase (351 aa).

It belongs to the AIR synthase family.

Its subcellular location is the cytoplasm. It catalyses the reaction 2-formamido-N(1)-(5-O-phospho-beta-D-ribosyl)acetamidine + ATP = 5-amino-1-(5-phospho-beta-D-ribosyl)imidazole + ADP + phosphate + H(+). It functions in the pathway purine metabolism; IMP biosynthesis via de novo pathway; 5-amino-1-(5-phospho-D-ribosyl)imidazole from N(2)-formyl-N(1)-(5-phospho-D-ribosyl)glycinamide: step 2/2. The sequence is that of Phosphoribosylformylglycinamidine cyclo-ligase from Burkholderia pseudomallei (strain 668).